Reading from the N-terminus, the 251-residue chain is 2,3-bisphosphoglycerate-dependent phosphoglycerate mutase 2 (251 aa).

Substrate is bound by residues 8–15, 21–22, Arg-60, 87–90, Lys-98, 114–115, and 183–184; these read RHGESTWN, TG, ERHY, RR, and GN. His-9 acts as the Tele-phosphohistidine intermediate in catalysis. Glu-87 acts as the Proton donor/acceptor in catalysis.

It belongs to the phosphoglycerate mutase family. BPG-dependent PGAM subfamily. In terms of assembly, homodimer.

The enzyme catalyses (2R)-2-phosphoglycerate = (2R)-3-phosphoglycerate. The protein operates within carbohydrate degradation; glycolysis; pyruvate from D-glyceraldehyde 3-phosphate: step 3/5. Functionally, catalyzes the interconversion of 2-phosphoglycerate and 3-phosphoglycerate. The sequence is that of 2,3-bisphosphoglycerate-dependent phosphoglycerate mutase 2 from Nitrosospira multiformis (strain ATCC 25196 / NCIMB 11849 / C 71).